The chain runs to 305 residues: UDP-3-O-acyl-N-acetylglucosamine deacetylase (305 aa).

3 residues coordinate Zn(2+): His79, His238, and Asp242. His265 serves as the catalytic Proton donor.

This sequence belongs to the LpxC family. It depends on Zn(2+) as a cofactor.

The catalysed reaction is a UDP-3-O-[(3R)-3-hydroxyacyl]-N-acetyl-alpha-D-glucosamine + H2O = a UDP-3-O-[(3R)-3-hydroxyacyl]-alpha-D-glucosamine + acetate. Its pathway is glycolipid biosynthesis; lipid IV(A) biosynthesis; lipid IV(A) from (3R)-3-hydroxytetradecanoyl-[acyl-carrier-protein] and UDP-N-acetyl-alpha-D-glucosamine: step 2/6. In terms of biological role, catalyzes the hydrolysis of UDP-3-O-myristoyl-N-acetylglucosamine to form UDP-3-O-myristoylglucosamine and acetate, the committed step in lipid A biosynthesis. The chain is UDP-3-O-acyl-N-acetylglucosamine deacetylase from Vibrio parahaemolyticus serotype O3:K6 (strain RIMD 2210633).